A 307-amino-acid polypeptide reads, in one-letter code: Transcription initiation factor IIB 2 (307 aa).

A TFIIB-type zinc finger spans residues 7–38; sequence TPKRCPECNSEHLIRDYEHGELICADCGAVIE. 4 residues coordinate Zn(2+): C11, C14, C30, and C33. Tandem repeats lie at residues 124-207 and 218-299.

Belongs to the TFIIB family.

Its function is as follows. Stabilizes TBP binding to an archaeal box-A promoter. Also responsible for recruiting RNA polymerase II to the pre-initiation complex (DNA-TBP-TFIIB). The chain is Transcription initiation factor IIB 2 from Thermoplasma acidophilum (strain ATCC 25905 / DSM 1728 / JCM 9062 / NBRC 15155 / AMRC-C165).